A 146-amino-acid polypeptide reads, in one-letter code: Anti-sigma F factor (146 aa).

This sequence belongs to the anti-sigma-factor family.

It carries out the reaction L-seryl-[protein] + ATP = O-phospho-L-seryl-[protein] + ADP + H(+). It catalyses the reaction L-threonyl-[protein] + ATP = O-phospho-L-threonyl-[protein] + ADP + H(+). Binds to sigma F and blocks its ability to form an RNA polymerase holoenzyme (E-sigma F). Phosphorylates SpoIIAA on a serine residue. This phosphorylation may enable SpoIIAA to act as an anti-anti-sigma factor that counteracts SpoIIAB and thus releases sigma F from inhibition. In Lysinibacillus sphaericus (Bacillus sphaericus), this protein is Anti-sigma F factor.